We begin with the raw amino-acid sequence, 347 residues long: 5-deoxyribose 1-phosphate isomerase (347 aa).

Substrate is bound by residues 48 to 50 (RGA), Arg91, and Gln198. Asp239 serves as the catalytic Proton donor. 249 to 250 (NK) contacts substrate.

It belongs to the EIF-2B alpha/beta/delta subunits family. DrdI subfamily.

The enzyme catalyses 5-deoxy-alpha-D-ribose 1-phosphate = 5-deoxy-D-ribulose 1-phosphate. Its pathway is carbohydrate degradation. Functionally, catalyzes the isomerization of 5-deoxy-alpha-D-ribose 1-phosphate to 5-deoxy-D-ribulose 1-phosphate, as part of a 5-deoxyribose salvage pathway that recycles this toxic radical SAM enzyme by-product to mainstream metabolites. This chain is 5-deoxyribose 1-phosphate isomerase, found in Petrotoga mobilis (strain DSM 10674 / SJ95).